Here is a 412-residue protein sequence, read N- to C-terminus: Multifunctional CCA protein (412 aa).

Glycine 8 and arginine 11 together coordinate ATP. Residues glycine 8 and arginine 11 each contribute to the CTP site. Mg(2+)-binding residues include glutamate 21 and aspartate 23. Residues arginine 91, arginine 137, and arginine 140 each contribute to the ATP site. Arginine 91, arginine 137, and arginine 140 together coordinate CTP. An HD domain is found at 228–329 (TGIHTLMTLA…LKLFNAIDVW (102 aa)).

This sequence belongs to the tRNA nucleotidyltransferase/poly(A) polymerase family. Bacterial CCA-adding enzyme type 1 subfamily. As to quaternary structure, monomer. Can also form homodimers and oligomers. Mg(2+) serves as cofactor. Ni(2+) is required as a cofactor.

It catalyses the reaction a tRNA precursor + 2 CTP + ATP = a tRNA with a 3' CCA end + 3 diphosphate. The catalysed reaction is a tRNA with a 3' CCA end + 2 CTP + ATP = a tRNA with a 3' CCACCA end + 3 diphosphate. In terms of biological role, catalyzes the addition and repair of the essential 3'-terminal CCA sequence in tRNAs without using a nucleic acid template. Adds these three nucleotides in the order of C, C, and A to the tRNA nucleotide-73, using CTP and ATP as substrates and producing inorganic pyrophosphate. tRNA 3'-terminal CCA addition is required both for tRNA processing and repair. Also involved in tRNA surveillance by mediating tandem CCA addition to generate a CCACCA at the 3' terminus of unstable tRNAs. While stable tRNAs receive only 3'-terminal CCA, unstable tRNAs are marked with CCACCA and rapidly degraded. The polypeptide is Multifunctional CCA protein (Yersinia pestis).